We begin with the raw amino-acid sequence, 1203 residues long: MPATNQGWPEDFGFQLGGSGPCFVIEVAEGSSAHAGGLRPGDQILEVEGLAVGGLSRERIVRLARRCPRVPPSLGVLPGPEGGPTALTAAWLTRRFGRSLPLSRELLRLAGGPRPDAVHRERRRKAQEFSCQVDDILGDRLTAKEQVFTALKQFAAEQRVDELVWTLTLVLPSEAQGPVLDNLRIFIPKKHRARFDEVVSQGLLGKLCRARRAQGAQRLRRSRSEERPERLLVSTRASAAPRRPDEPPPRKATSLLGGRTGPGGPRRTVRVYKGNKSFGFTLRGHGPVWIESVLPGSPAENASLKSGDRILFLNGLDMRNCSHDKVVSMLQGSGAMPTLVVEEGPVPFASDSDSLDSPTRASALTSLQWVADILPSSIRVQGRTFSQQLDHLLTPPERYGVCRALERFFQHRNIDTLIVDVYPVLDTPAKQVLWQFLYQLLTYEEQELCQEKIACFLGYTAMTEPESSLDLEPESTPEPTPEPQPRSSLRASSMCRRSLRSQGLETSLSCGPGDCPEMPLPLIPGERQAGDGTSLPETPNPKMMSAVYAELESRLNSSFKGKIGTMSKSRASPPVPSLVGTSGPRTLSGVSWPSDRLLPSPCYDPLCSGGLASPSSSESHPYASLDSSRAPSPQPGLGSIHADSPPSPDPIRPPSRRKLFAFSRPVRSRDTDRFLDALSEQLGPRLSIVDDFLTPENDYEEMSFHDDQGSFVTNERSSASECVSSSEEGSSLTYSSISDHIPPPPLSPPPPPPLPFHDPKPSSRTSDGPRGPPQSLTKPLTQINHPVPPPPPPPLPPPVPCAPPMLSRGVGHRRSETSHMSVKRLRWEQVENSEGTIWGQLGEDSDYDKLSDMVKYLDLELHFGTQKPPKPVPGPEPFRKKEVVEILSHKKAYNTSILLAHLKLTPGELRQVLMSMEPRRLEPAHLAQLLLFAPDADEEQRYQAFREAPGRLSEPDQFVLQMLSVPEYKTRLRSLHFQATLQEKTEEIRGSLECLRQASLELKNSRKLAKILEFVLAMGNYLNDGQPKTNKTTGFKINFLTELNSTKTVDGKSTFLHILAKSLSQHFPELLGFAQDLPTVPLAAKVNQRALTGDLADLHDTVSEIQVACQSMAPSSEDRFAVVMASFLETAQPALRALDGLQREAMEELGKALAFFGEDSKATTSEAFFGIFSEFMSKFERALSDLQAGDGPRSSGMVSPLAW.

The region spanning 1–79 (MPATNQGWPE…VPPSLGVLPG (79 aa)) is the PDZ 1 domain. The S-palmitoyl cysteine moiety is linked to residue Ala-3. A disordered region spans residues 215–270 (GAQRLRRSRSEERPERLLVSTRASAAPRRPDEPPPRKATSLLGGRTGPGGPRRTVR). Residues 231–241 (LLVSTRASAAP) are compositionally biased toward low complexity. Residues 268-345 (TVRVYKGNKS…MPTLVVEEGP (78 aa)) enclose the PDZ 2 domain. Phosphoserine is present on Ser-303. Disordered stretches follow at residues 466 to 541 (ESSL…TPNP), 563 to 586 (IGTMSKSRASPPVPSLVGTSGPRT), 611 to 656 (LASP…PPSR), and 710 to 821 (SFVT…SHMS). Positions 500–509 (RSQGLETSLS) are enriched in polar residues. Residues Ser-572, Ser-613, Ser-644, and Ser-647 each carry the phosphoserine modification. Residues 611-625 (LASPSSSESHPYASL) are compositionally biased toward low complexity. A compositionally biased stretch (low complexity) spans 715-740 (ERSSASECVSSSEEGSSLTYSSISDH). Residues 741–756 (IPPPPLSPPPPPPLPF) are compositionally biased toward pro residues. Polar residues predominate over residues 774–784 (QSLTKPLTQIN). Pro residues predominate over residues 786 to 803 (PVPPPPPPPLPPPVPCAP). Residues 812 to 1203 (HRRSETSHMS…SSGMVSPLAW (392 aa)) enclose the FH2 domain.

In terms of assembly, interacts with C-terminus of the glutamate receptor GRID2 via PDZ domain. Isoform 2 also interacts with Profilin-2/PFN2 and with the monocarboxylate transporter SLC16A7 via PDZ domain. The interaction of isoform 2 with GRID2 is dependent on GRID2 phosphorylation by PKA. Post-translationally, isoform 2 is palmitoylated. Palmitoylation of isoform 2 is necessary for the enhanced cell surface expression of GRID2, and is also responsible for the accumulation of isoform 2 within dendritic spines. Isoform 1 and isoform 2 are differentially localized, probably modulating GRID2 signaling in neurons. As to expression, isoform 1 is expressed in the cerebellum, but not in the cerebral cortex. Isoform 2 is expressed in the cell body of purkinge cells of the cerebellum and weakly expressed in the cerebrum and the brainstem as well as various nuclei of the thalamus. Isoform 2 is highly expressed in the cerebral cortex than in the cerebellum. Isoform 3 is expressed in the cerebellum and cerebrum.

The protein resides in the postsynaptic cell membrane. It is found in the cell projection. Its subcellular location is the dendritic spine. It localises to the synapse. The protein localises to the cell membrane. Functionally, postsynaptic scaffolding protein at the Purkinje cell synapse, where it may serve to link GRID2 with actin cytoskeleton and various signaling molecules. The polypeptide is Delphilin (Grid2ip) (Mus musculus (Mouse)).